Here is a 388-residue protein sequence, read N- to C-terminus: Probable proton-coupled zinc antiporter SLC30A3 (388 aa).

A compositionally biased stretch (polar residues) spans 1–13 (MEPSPTTGGSETT). 2 disordered regions span residues 1–30 (MEPS…GLRL) and 35–54 (TEAP…SFHH). Residues 1-75 (MEPSPTTGGS…TPERMQAQRQ (75 aa)) are Cytoplasmic-facing. Residues 76-96 (LCTACAVCCVFMAGEVVGGYL) form a helical membrane-spanning segment. At 97-105 (AHSLAIMTD) the chain is on the lumenal side. The helical transmembrane segment at 106-126 (AAHLLADVGSMMGSLFSLWLS) threads the bilayer. Residues His108 and Asp112 each contribute to the Zn(2+) site. The Cytoplasmic segment spans residues 127-145 (TRPATRTMTFGWHRSETLG). A helical membrane pass occupies residues 146 to 166 (ALASVVSLWMVTGILLYLAFI). At 167-177 (RLLHSDYHIEG) the chain is on the lumenal side. The helical transmembrane segment at 178-198 (GAMLLTASIAVCANLLMAFVL) threads the bilayer. At 199–235 (HQAGPPHSHGSRGAEYAPLEEGSGEPLPLGNTSVRAA) the chain is on the cytoplasmic side. The helical transmembrane segment at 236–256 (FVHVLGDLLQSLGVLIASILI) threads the bilayer. Residues His238 and Asp242 each contribute to the Zn(2+) site. Topologically, residues 257–264 (YFKPQYKA) are lumenal. Residues 265–285 (ADPISTFLFSICALGSTAPTL) form a helical membrane-spanning segment. Over 286 to 388 (RDVLRVLMEG…CLRCQEPPQA (103 aa)) the chain is Cytoplasmic.

It belongs to the cation diffusion facilitator (CDF) transporter (TC 2.A.4) family. SLC30A subfamily. In terms of assembly, homodimer. Homodimerization could regulate efficiency of zinc transport. Interacts with TMEM163.

The protein localises to the cytoplasmic vesicle. Its subcellular location is the secretory vesicle. It localises to the synaptic vesicle membrane. The protein resides in the synapse. It is found in the synaptosome. The protein localises to the late endosome membrane. Its subcellular location is the lysosome membrane. The enzyme catalyses Zn(2+)(in) + 2 H(+)(out) = Zn(2+)(out) + 2 H(+)(in). Functionally, probable proton-coupled zinc ion antiporter mediating the import of zinc from cytoplasm into synaptic vesicles and participating to cellular zinc ion homeostasis in the brain. This is Probable proton-coupled zinc antiporter SLC30A3 from Bos taurus (Bovine).